Here is a 2005-residue protein sequence, read N- to C-terminus: Chitin synthase 8 (2005 aa).

One can recognise a Myosin motor domain in the interval 5–773 (DEVAKLSQLT…AFRELEDELR (769 aa)). ATP is bound at residue 108 to 115 (GDTSSGKS). 4 N-linked (GlcNAc...) asparagine glycosylation sites follow: Asn-164, Asn-364, Asn-390, and Asn-546. The disordered stretch occupies residues 585-631 (QSVKPMRAPSTRRPNRGNTIKRTNTIKKADDDDSDEDAADAADASTS). Residues 615–624 (DDDSDEDAAD) show a composition bias toward acidic residues. The actin-binding stretch occupies residues 647–669 (LDLLLETLEDTKTWFTLCLRPND). Transmembrane regions (helical) follow at residues 929–949 (KWVALTWAITFWIPSFILSRF) and 965–985 (LAINLIIWFICACAVFVIVVL). Residue Asn-1076 is glycosylated (N-linked (GlcNAc...) asparagine). Transmembrane regions (helical) follow at residues 1232-1252 (ILLALSLFMVAILGFKFLAAL), 1604-1624 (LIFTPGLCGFCLFSMRFIVFI), and 1626-1646 (LLSTIIAPVTVCYIVYLIVLV). Asn-1650 carries an N-linked (GlcNAc...) asparagine glycan. Transmembrane regions (helical) follow at residues 1653 to 1673 (VPLTAIIMLAAIYGCQAVIFL) and 1680 to 1700 (MIGWMIVYIIGIPIWSLFLPL). 2 N-linked (GlcNAc...) asparagine glycosylation sites follow: Asn-1770 and Asn-1794. Positions 1796–1821 (SFGHSPSPSYGGTPSQFGAFAPGPGS) are disordered. Positions 1797–1811 (FGHSPSPSYGGTPSQ) are enriched in polar residues. N-linked (GlcNAc...) asparagine glycosylation is present at Asn-1882. The disordered stretch occupies residues 1912 to 1950 (FATAEQQQQQQQQQQAAGLSGSGGSKSPPREAVAGGLPS). Over residues 1917–1930 (QQQQQQQQQQAAGL) the composition is skewed to low complexity. The DEK-C domain maps to 1948 to 2003 (LPSDSQIKLDIRSLIAESDLTTITKKQLRAKLEQKYATSIESKKAFINSEIENVLS).

In the N-terminal section; belongs to the TRAFAC class myosin-kinesin ATPase superfamily. Myosin family. It in the C-terminal section; belongs to the chitin synthase family. Class V subfamily.

The protein localises to the cell membrane. The protein resides in the cytoplasmic vesicle membrane. It localises to the cell tip. The catalysed reaction is [(1-&gt;4)-N-acetyl-beta-D-glucosaminyl](n) + UDP-N-acetyl-alpha-D-glucosamine = [(1-&gt;4)-N-acetyl-beta-D-glucosaminyl](n+1) + UDP + H(+). Functionally, polymerizes chitin, a structural polymer of the cell wall and septum, by transferring the sugar moiety of UDP-GlcNAc to the non-reducing end of the growing chitin polymer. Involved in mating tube and dikaryotic hyphae formation and required for the formation of invading hyphae during plant infection. The chain is Chitin synthase 8 from Mycosarcoma maydis (Corn smut fungus).